Here is a 192-residue protein sequence, read N- to C-terminus: Thymidine kinase (192 aa).

Residues 9 to 16 (SAMNAGKS) and 87 to 90 (DECQ) each bind ATP. Glu-88 functions as the Proton acceptor in the catalytic mechanism. Zn(2+) is bound by residues Cys-145, Cys-147, Cys-182, and His-185.

This sequence belongs to the thymidine kinase family. As to quaternary structure, homotetramer.

Its subcellular location is the cytoplasm. The enzyme catalyses thymidine + ATP = dTMP + ADP + H(+). The chain is Thymidine kinase from Vibrio cholerae serotype O1 (strain ATCC 39315 / El Tor Inaba N16961).